The sequence spans 493 residues: MDGIFCALPLSLLLLLQSCGVWGAPPQPRGTLCRTKPTDLVFIIDSSRSVRPQEFEKVKVFLSRVIEGLDVGPNSTRVGVINYASAVKNEFSLKTHQTKAELLQAVQRIEPLSTGTMTGLAIQFAISRAFSDTEGARLRSPNINKVAIVVTDGRPQDGVQDVSARARQAGIEIFAIGVGRVDMHTLRQIASEPLDDHVDYVESYSVIEKLTHKFQEAFCVVSDLCATGDHDCEQICISTPGSYKCACKEGFTLNNDGKTCSACSGGSGSALDLVFLIDGSKSVRPENFELVKKFINQIVESLEVSEKQAQVGLVQYSSSVRQEFPLGQFKNKKDIKAAVKKMAYMEKGTMTGQALKYLVDSSFSIANGARPGVPKVGIVFTDGRSQDYITDAAKKAKDLGFRMFAVGVGNAVEDELREIASEPVAEHYFYTADFRTISNIGKKLQMKICVEEDPCECKSIVKFQTKVEELINTLQQKLEAVAKRIEALENKII.

An N-terminal signal peptide occupies residues 1-23; it reads MDGIFCALPLSLLLLLQSCGVWG. The VWFA 1 domain occupies 24–220; sequence APPQPRGTLC…THKFQEAFCV (197 aa). Asn74 carries an N-linked (GlcNAc...) asparagine glycan. The EGF-like domain maps to 221–261; sequence VSDLCATGDHDCEQICISTPGSYKCACKEGFTLNNDGKTCS. 3 disulfides stabilise this stretch: Cys225/Cys236, Cys232/Cys245, and Cys247/Cys260. The VWFA 2 domain occupies 262 to 450; the sequence is ACSGGSGSAL…GKKLQMKICV (189 aa). The stretch at 462-492 forms a coiled coil; the sequence is KFQTKVEELINTLQQKLEAVAKRIEALENKI.

In terms of assembly, homotrimer. In terms of tissue distribution, expressed in xyphoid cartilage and chondrocytes (at protein level).

The protein localises to the secreted. The protein resides in the extracellular space. It localises to the extracellular matrix. In terms of biological role, a major component of the extracellular matrix of non-articular cartilage. Binds to type 2 collagens and forms long concatenated protein networks as part of the extracellular matrix. Required for the network-like organization and bundling of collagen fibrils surrounding chondrocytes in the zones of maturation and hypertrophy. Required for mechanotransduction and adaption to mechanical loading in cartilage chondrocytes, resulting in an increase in expression of the extracellular matrix components ACAN and COL2A1. Acts as a moderator of angiogenesis in response to injury. This is Matrilin-1 from Gallus gallus (Chicken).